A 177-amino-acid polypeptide reads, in one-letter code: uncharacterized protein (177 aa).

Helical transmembrane passes span 4-24 (IIILILLLMGTLLGLKRGFIL), 33-53 (ILSIAFAALFYKNVAPHLHWI), 80-100 (IAFIVLFIIAKILLRIIGSFL), and 115-135 (MLGAVLGFLEVYLFTFVLLYV).

The protein resides in the cell membrane. This is an uncharacterized protein from Bacillus subtilis (strain 168).